The sequence spans 489 residues: 2-(3-amino-3-carboxypropyl)histidine synthase subunit 2 (489 aa).

Methionine 1 carries the N-acetylmethionine modification. Serine 7 carries the post-translational modification Phosphoserine. Cysteine 89, cysteine 110, and cysteine 341 together coordinate [4Fe-4S] cluster. Threonine 435 carries the phosphothreonine modification. Phosphoserine occurs at positions 446 and 456. Threonine 467 bears the Phosphothreonine mark. At serine 488 the chain carries Phosphoserine.

This sequence belongs to the DPH1/DPH2 family. DPH2 subfamily. As to quaternary structure, component of the 2-(3-amino-3-carboxypropyl)histidine synthase complex composed of DPH1, DPH2, DPH3 and a NADH-dependent reductase. Interacts with DPH1. Requires [4Fe-4S] cluster as cofactor. As to expression, strongly expressed in skeletal muscle. Moderately expressed in heart, small intestine, liver, pancreas, testis and colon. Weakly expressed in brain, placenta, kidney, spleen, thymus, prostate, ovary and lymphocytes.

The protein operates within protein modification; peptidyl-diphthamide biosynthesis. Functionally, required for the first step of diphthamide biosynthesis, a post-translational modification of histidine which occurs in elongation factor 2. DPH1 and DPH2 transfer a 3-amino-3-carboxypropyl (ACP) group from S-adenosyl-L-methionine (SAM) to a histidine residue, the reaction is assisted by a reduction system comprising DPH3 and a NADH-dependent reductase. Facilitates the reduction of the catalytic iron-sulfur cluster found in the DPH1 subunit. The polypeptide is 2-(3-amino-3-carboxypropyl)histidine synthase subunit 2 (DPH2) (Homo sapiens (Human)).